The chain runs to 146 residues: DNA protection during starvation protein 2 (146 aa).

Positions 27, 54, and 58 each coordinate Fe cation.

Belongs to the Dps family. As to quaternary structure, the 12 subunits form a hollow sphere into which the mineral iron core of up to 500 Fe(3+) can be deposited. Homododecamer.

The protein localises to the cytoplasm. The enzyme catalyses 2 Fe(2+) + H2O2 + 2 H(+) = 2 Fe(3+) + 2 H2O. Its function is as follows. Protects DNA from oxidative damage by sequestering intracellular Fe(2+) ion and storing it in the form of Fe(3+) oxyhydroxide mineral. One hydrogen peroxide oxidizes two Fe(2+) ions, which prevents hydroxyl radical production by the Fenton reaction. It is capable of binding and sequestering Fe(2+) ion. Does not bind DNA. This is DNA protection during starvation protein 2 (dps2) from Bacillus anthracis.